The chain runs to 845 residues: Aryl hydrocarbon receptor (845 aa).

A propeptide spanning residues 1-10 (MNSSSASITY) is cleaved from the precursor. A compositionally biased stretch (polar residues) spans 1-10 (MNSSSASITY). Residues 1–39 (MNSSSASITYASRKRRKPVQKTVKPVPAEGIKSNPSKRH) form a disordered region. 2 consecutive short sequence motifs (nuclear localization signal) follow at residues 13–16 (RKRR) and 37–42 (KRHRDR). The bHLH domain maps to 27-80 (PAEGIKSNPSKRHRDRLNTELDRLASLLPFPQDVVNKLDKLSVLRLSVSYLRAK). 3 required for maintaining the overall integrity of the AHR:ARNT heterodimer and its transcriptional activity regions span residues 50-82 (LASLLPFPQDVVNKLDKLSVLRLSVSYLRAKSF), 117-125 (LLQALNGFV), and 265-267 (FAI). The short motif at 64–72 (LDKLSVLRL) is the Nuclear export signal element. The 71-residue stretch at 110-180 (NLQEGEFLLQ…RQLHWALNPS (71 aa)) folds into the PAS 1 domain. The 68-residue stretch at 274–341 (PSILEIRTKN…CAEYHIRMIK (68 aa)) folds into the PAS 2 domain. A PAC domain is found at 347 to 385 (LIVFRLLTKDNRWTWVQSNARLVYKNGRPDYIIATQRPL). A disordered region spans residues 820–845 (NNTQPTTHLHPSEARPFSDLTSSGFL).

Homodimer. Heterodimer; efficient DNA binding requires dimerization with another bHLH protein. Interacts with ARNT; the heterodimer ARNT:AHR binds to core DNA sequence 5'-TGCGTG-3' within the dioxin response element (DRE) of target gene promoters and activates their transcription. Binds MYBBP1A. Interacts with coactivators including SRC-1, RIP140 and NOCA7, and with the corepressor SMRT. Interacts with NEDD8 and IVNS1ABP. Interacts with BMAL1. Interacts with HSP90AB1. Interacts with TIPARP; leading to mono-ADP-ribosylation of AHR and subsequent inhibition of AHR. Mono-ADP-ribosylated, leading to inhibit transcription activator activity of AHR.

Its subcellular location is the cytoplasm. The protein localises to the nucleus. Ligand-activated transcription factor that enables cells to adapt to changing conditions by sensing compounds from the environment, diet, microbiome and cellular metabolism, and which plays important roles in development, immunity and cancer. Upon ligand binding, translocates into the nucleus, where it heterodimerizes with ARNT and induces transcription by binding to xenobiotic response elements (XRE). Regulates a variety of biological processes, including angiogenesis, hematopoiesis, drug and lipid metabolism, cell motility and immune modulation. Xenobiotics can act as ligands: upon xenobiotic-binding, activates the expression of multiple phase I and II xenobiotic chemical metabolizing enzyme genes (such as the CYP1A1 gene). Mediates biochemical and toxic effects of halogenated aromatic hydrocarbons. Next to xenobiotics, natural ligands derived from plants, microbiota, and endogenous metabolism are potent AHR agonists. Tryptophan (Trp) derivatives constitute an important class of endogenous AHR ligands. Acts as a negative regulator of anti-tumor immunity: indoles and kynurenic acid generated by Trp catabolism act as ligand and activate AHR, thereby promoting AHR-driven cancer cell motility and suppressing adaptive immunity. Regulates the circadian clock by inhibiting the basal and circadian expression of the core circadian component PER1. Inhibits PER1 by repressing the CLOCK-BMAL1 heterodimer mediated transcriptional activation of PER1. The heterodimer ARNT:AHR binds to core DNA sequence 5'-TGCGTG-3' within the dioxin response element (DRE) of target gene promoters and activates their transcription. This Delphinapterus leucas (Beluga whale) protein is Aryl hydrocarbon receptor (AHR).